The primary structure comprises 284 residues: Bifunctional protein FolD (284 aa).

Residues 165–167 (GRS) and S190 contribute to the NADP(+) site.

Belongs to the tetrahydrofolate dehydrogenase/cyclohydrolase family. As to quaternary structure, homodimer.

The catalysed reaction is (6R)-5,10-methylene-5,6,7,8-tetrahydrofolate + NADP(+) = (6R)-5,10-methenyltetrahydrofolate + NADPH. It carries out the reaction (6R)-5,10-methenyltetrahydrofolate + H2O = (6R)-10-formyltetrahydrofolate + H(+). It participates in one-carbon metabolism; tetrahydrofolate interconversion. Its function is as follows. Catalyzes the oxidation of 5,10-methylenetetrahydrofolate to 5,10-methenyltetrahydrofolate and then the hydrolysis of 5,10-methenyltetrahydrofolate to 10-formyltetrahydrofolate. This chain is Bifunctional protein FolD, found in Streptococcus sanguinis (strain SK36).